Consider the following 442-residue polypeptide: Amino-acid acetyltransferase (442 aa).

In terms of domain architecture, N-acetyltransferase spans Glu295–Ser442.

The protein belongs to the acetyltransferase family. ArgA subfamily.

It is found in the cytoplasm. It catalyses the reaction L-glutamate + acetyl-CoA = N-acetyl-L-glutamate + CoA + H(+). It functions in the pathway amino-acid biosynthesis; L-arginine biosynthesis; N(2)-acetyl-L-ornithine from L-glutamate: step 1/4. In Aeromonas salmonicida (strain A449), this protein is Amino-acid acetyltransferase.